We begin with the raw amino-acid sequence, 836 residues long: Taste receptor type 1 member 2 (836 aa).

The first 19 residues, 1–19 (MGPRAKAVCSLFILLQVLA), serve as a signal peptide directing secretion. The Extracellular segment spans residues 20–565 (EPAENSDFYL…AFLEWHEPST (546 aa)). N-linked (GlcNAc...) asparagine glycosylation is found at asparagine 84, asparagine 292, asparagine 312, asparagine 351, asparagine 427, asparagine 479, asparagine 486, asparagine 526, and asparagine 546. The chain crosses the membrane as a helical span at residues 566 to 586 (IFVVMLTILGFLSTLAIMVIF). Residues 587–601 (WRHLHTPVVRSAGGP) lie on the Cytoplasmic side of the membrane. Residues 602 to 622 (MCFLMLVPLLLAYAMVPMYIG) form a helical membrane-spanning segment. Residues 623 to 634 (QPTFFSCLWRQT) lie on the Extracellular side of the membrane. Residues 635-655 (FFTLCFTICISCITVRSFQIV) traverse the membrane as a helical segment. Residues 656–680 (CIFKMARRLPRAYGYWVRCHGPYVF) are Cytoplasmic-facing. A helical transmembrane segment spans residues 681 to 701 (VASFMVLKVVIVAGNVLATTA). Residues 702 to 724 (NPTARPDPDDPNIMVLSCNYRRA) lie on the Extracellular side of the membrane. Residues 725 to 745 (LLFNTSLDLLLSVAGFSFAYM) form a helical membrane-spanning segment. Residues 746 to 757 (GKELPTNYNEAK) lie on the Cytoplasmic side of the membrane. Residues 758-778 (FITLCMTFYFTSSVSLCTFMS) traverse the membrane as a helical segment. Residues 779 to 781 (VYD) lie on the Extracellular side of the membrane. The helical transmembrane segment at 782–802 (GVLVTILDLLITVLNLLGISF) threads the bilayer. Over 803–836 (GYFGPKCYMVLFYPERNTQVYFSSMIQGYTMGKD) the chain is Cytoplasmic.

It belongs to the G-protein coupled receptor 3 family. TAS1R subfamily. In terms of assembly, forms heterodimers with TAS1R3.

Its subcellular location is the cell membrane. Putative taste receptor. TAS1R2/TAS1R3 recognizes diverse natural and synthetic sweeteners. The protein is Taste receptor type 1 member 2 (TAS1R2) of Canis lupus familiaris (Dog).